The primary structure comprises 413 residues: Eukaryotic initiation factor 4A-14 (413 aa).

The Q motif motif lies at 40–68 (DSFDAMGLQENLLRGIYAYGFEKPSAIQQ). In terms of domain architecture, Helicase ATP-binding spans 71 to 241 (IVPFCKGLDV…RKFMSKPVRI (171 aa)). 84–91 (AQSGTGKT) lines the ATP pocket. Residues 189-192 (DEAD) carry the DEAD box motif. A Helicase C-terminal domain is found at 252 to 413 (GIKQFYVNVD…ELPANVADLL (162 aa)).

The protein belongs to the DEAD box helicase family. eIF4A subfamily. In terms of assembly, eIF4F is a multi-subunit complex, the composition of which varies with external and internal environmental conditions. It is composed of at least EIF4A, EIF4E and EIF4G.

It catalyses the reaction ATP + H2O = ADP + phosphate + H(+). Functionally, ATP-dependent RNA helicase which is a subunit of the eIF4F complex involved in cap recognition and is required for mRNA binding to ribosome. In the current model of translation initiation, eIF4A unwinds RNA secondary structures in the 5'-UTR of mRNAs which is necessary to allow efficient binding of the small ribosomal subunit, and subsequent scanning for the initiator codon. The polypeptide is Eukaryotic initiation factor 4A-14 (Nicotiana tabacum (Common tobacco)).